Reading from the N-terminus, the 229-residue chain is Ribosome maturation factor RimM (229 aa).

Residues 1-21 form a disordered region; the sequence is MAGHDSGNAKRGRSPSFGVFV. The region spanning 148-229 is the PRC barrel domain; the sequence is ADEFYWVDLI…RVVVDWEADY (82 aa).

Belongs to the RimM family. As to quaternary structure, binds ribosomal protein uS19.

The protein resides in the cytoplasm. Functionally, an accessory protein needed during the final step in the assembly of 30S ribosomal subunit, possibly for assembly of the head region. Essential for efficient processing of 16S rRNA. May be needed both before and after RbfA during the maturation of 16S rRNA. It has affinity for free ribosomal 30S subunits but not for 70S ribosomes. This chain is Ribosome maturation factor RimM, found in Burkholderia mallei (strain NCTC 10247).